Consider the following 515-residue polypeptide: Phenylalanine--tRNA ligase beta subunit (515 aa).

A B5 domain is found at 263–334 (HEYVKIYVDE…IVMGYNQMPR (72 aa)). Residues Asn312, Asp318, Glu321, and Asp322 each coordinate Mg(2+).

The protein belongs to the phenylalanyl-tRNA synthetase beta subunit family. Type 2 subfamily. In terms of assembly, tetramer of two alpha and two beta subunits. The cofactor is Mg(2+).

It localises to the cytoplasm. It catalyses the reaction tRNA(Phe) + L-phenylalanine + ATP = L-phenylalanyl-tRNA(Phe) + AMP + diphosphate + H(+). The protein is Phenylalanine--tRNA ligase beta subunit of Pyrobaculum aerophilum (strain ATCC 51768 / DSM 7523 / JCM 9630 / CIP 104966 / NBRC 100827 / IM2).